Consider the following 123-residue polypeptide: Protein Wnt-3a (123 aa).

Ser-1 carries O-palmitoleoyl serine lipidation. Cysteines 89 and 104 form a disulfide. N-linked (GlcNAc...) asparagine glycosylation is present at Asn-90.

The protein belongs to the Wnt family. In terms of processing, disulfide bonds have critical and distinct roles in secretion and activity. Loss of each conserved cysteine results in high molecular weight oxidized Wnt oligomers, which are formed through inter-Wnt disulfide bonding. Palmitoleoylation is required for efficient binding to frizzled receptors. Depalmitoleoylation leads to Wnt signaling pathway inhibition.

It is found in the secreted. The protein resides in the extracellular space. Its subcellular location is the extracellular matrix. In terms of biological role, ligand for members of the frizzled family of seven transmembrane receptors. Functions in the canonical Wnt signaling pathway that results in activation of transcription factors of the TCF/LEF family. Required for normal embryonic mesoderm development and formation of caudal somites. Required for normal morphogenesis of the developing neural tube. The sequence is that of Protein Wnt-3a (WNT3A) from Meleagris gallopavo (Wild turkey).